Here is a 435-residue protein sequence, read N- to C-terminus: MTTFDIGSPLIAIAQKTRKAASKLAILSTEAKNQAIIAIAQALESAKDEILQANIADCEAANAEGIPKPLYKRLQLDEHKLRDAIVGVQDVGKLDDPVGKVQIHRELDTGLILKRITCPLGVLGIIFEARPEAAIQIASLAIKSGNGVILKCGKEAVRSCEAIVKAIKQGLSHTAVNPDTVQLLTTREETLELLKLDKYVDLIIPRGSNSFVRFVQENTRIPVLGHADGICHLYIDKAADISKAVPITVDAKAQYPAVCNAIETLLVHQSIATEFLPKVADALQERHVELRGDKRTLKILPNIVSATEIDWETEYSDYILSIKIVDSIEDAIAHINEYGSRHTDAIITEDSTSVETFFGLVNSANIFHNCSTRFADGFRYGFGAEVGISTQQMPPRGPVGLEGLVTYKYQMTGDGHIVATYTGANAKAFTHRDLV.

It belongs to the gamma-glutamyl phosphate reductase family.

It localises to the cytoplasm. The enzyme catalyses L-glutamate 5-semialdehyde + phosphate + NADP(+) = L-glutamyl 5-phosphate + NADPH + H(+). It functions in the pathway amino-acid biosynthesis; L-proline biosynthesis; L-glutamate 5-semialdehyde from L-glutamate: step 2/2. Functionally, catalyzes the NADPH-dependent reduction of L-glutamate 5-phosphate into L-glutamate 5-semialdehyde and phosphate. The product spontaneously undergoes cyclization to form 1-pyrroline-5-carboxylate. In Nostoc punctiforme (strain ATCC 29133 / PCC 73102), this protein is Gamma-glutamyl phosphate reductase.